A 260-amino-acid chain; its full sequence is Cytochrome c oxidase subunit 3 (260 aa).

Residues 1–15 (MTHQTHAYHMVNPSP) are Mitochondrial matrix-facing. The helical transmembrane segment at 16-34 (WPLTGALSALLMTSGLAMW) threads the bilayer. At 35–40 (FHFNST) the chain is on the mitochondrial intermembrane side. A helical membrane pass occupies residues 41 to 66 (ALLMIGLTTNMLTMYQWWRDIIREST). The Mitochondrial matrix portion of the chain corresponds to 67–72 (FQGHHT). A helical transmembrane segment spans residues 73 to 105 (PAVQKGLRYGMILFIISEVLFFTGFFWAFYHSS). The Mitochondrial intermembrane portion of the chain corresponds to 106-128 (LAPTPELGGCWPPTGIHPLNPLE). The chain crosses the membrane as a helical span at residues 129 to 152 (VPLLNTSVLLASGVSITWAHHSLM). The Mitochondrial matrix portion of the chain corresponds to 153–155 (EGD). The chain crosses the membrane as a helical span at residues 156–183 (RNHMLQALFITITLGVYFTLLQASEYYE). Topologically, residues 184 to 190 (APFTISD) are mitochondrial intermembrane. A helical transmembrane segment spans residues 191 to 223 (GVYGSTFFVATGFHGLHVIIGSTFLIVCFFRQL). The Mitochondrial matrix segment spans residues 224–232 (KFHFTSNHH). Residues 233–256 (FGFEAAAWYWHFVDVVWLFLYVSI) form a helical membrane-spanning segment. Residues 257–260 (YWWG) lie on the Mitochondrial intermembrane side of the membrane.

Belongs to the cytochrome c oxidase subunit 3 family. In terms of assembly, component of the cytochrome c oxidase (complex IV, CIV), a multisubunit enzyme composed of 14 subunits. The complex is composed of a catalytic core of 3 subunits MT-CO1, MT-CO2 and MT-CO3, encoded in the mitochondrial DNA, and 11 supernumerary subunits COX4I, COX5A, COX5B, COX6A, COX6B, COX6C, COX7A, COX7B, COX7C, COX8 and NDUFA4, which are encoded in the nuclear genome. The complex exists as a monomer or a dimer and forms supercomplexes (SCs) in the inner mitochondrial membrane with NADH-ubiquinone oxidoreductase (complex I, CI) and ubiquinol-cytochrome c oxidoreductase (cytochrome b-c1 complex, complex III, CIII), resulting in different assemblies (supercomplex SCI(1)III(2)IV(1) and megacomplex MCI(2)III(2)IV(2)).

It localises to the mitochondrion inner membrane. The enzyme catalyses 4 Fe(II)-[cytochrome c] + O2 + 8 H(+)(in) = 4 Fe(III)-[cytochrome c] + 2 H2O + 4 H(+)(out). In terms of biological role, component of the cytochrome c oxidase, the last enzyme in the mitochondrial electron transport chain which drives oxidative phosphorylation. The respiratory chain contains 3 multisubunit complexes succinate dehydrogenase (complex II, CII), ubiquinol-cytochrome c oxidoreductase (cytochrome b-c1 complex, complex III, CIII) and cytochrome c oxidase (complex IV, CIV), that cooperate to transfer electrons derived from NADH and succinate to molecular oxygen, creating an electrochemical gradient over the inner membrane that drives transmembrane transport and the ATP synthase. Cytochrome c oxidase is the component of the respiratory chain that catalyzes the reduction of oxygen to water. Electrons originating from reduced cytochrome c in the intermembrane space (IMS) are transferred via the dinuclear copper A center (CU(A)) of subunit 2 and heme A of subunit 1 to the active site in subunit 1, a binuclear center (BNC) formed by heme A3 and copper B (CU(B)). The BNC reduces molecular oxygen to 2 water molecules using 4 electrons from cytochrome c in the IMS and 4 protons from the mitochondrial matrix. The chain is Cytochrome c oxidase subunit 3 (MT-CO3) from Bos mutus grunniens (Wild yak).